The following is a 489-amino-acid chain: DBIRD complex subunit ZNF326 (489 aa).

Disordered regions lie at residues 1–28 (MDRE…EMGD), 62–100 (EQGH…PSFT), 133–181 (VGSR…RPGL), and 205–263 (PPFK…KNSE). Polar residues predominate over residues 7 to 22 (SYNQRSMDSYGNQSYS). Residues 62–76 (EQGHFGDSYDGRYEN) are compositionally biased toward basic and acidic residues. Over residues 91 to 100 (GGSSWDPSFT) the composition is skewed to polar residues. The Bipartite nuclear localization signal motif lies at 200–221 (KRKMAPPFKPVGVFGKKQKLSK). 2 consecutive C2H2 AKAP95-type zinc fingers follow at residues 273–295 (CSFC…STTH) and 365–388 (CSAC…SADH). Residues 431 to 489 (ETQPEEQQQEQEEEEEEEEQQEQAAVPEQDLSEEQPAAIAAEPEGEDFTCDPLTTTDEV) are disordered. The span at 433 to 451 (QPEEQQQEQEEEEEEEEQQ) shows a compositional bias: acidic residues.

Belongs to the AKAP95 family. In terms of assembly, component of the DBIRD complex.

Its subcellular location is the nucleus. Its function is as follows. Core component of the DBIRD complex, a multiprotein complex that acts at the interface between core mRNP particles and RNA polymerase II (RNAPII) and integrates transcript elongation with the regulation of alternative splicing. The polypeptide is DBIRD complex subunit ZNF326 (znf326) (Xenopus tropicalis (Western clawed frog)).